Reading from the N-terminus, the 169-residue chain is Peptide methionine sulfoxide reductase MsrA (169 aa).

Residue C10 is part of the active site.

It belongs to the MsrA Met sulfoxide reductase family.

The catalysed reaction is L-methionyl-[protein] + [thioredoxin]-disulfide + H2O = L-methionyl-(S)-S-oxide-[protein] + [thioredoxin]-dithiol. It catalyses the reaction [thioredoxin]-disulfide + L-methionine + H2O = L-methionine (S)-S-oxide + [thioredoxin]-dithiol. Its function is as follows. Has an important function as a repair enzyme for proteins that have been inactivated by oxidation. Catalyzes the reversible oxidation-reduction of methionine sulfoxide in proteins to methionine. This chain is Peptide methionine sulfoxide reductase MsrA, found in Streptococcus pyogenes serotype M1.